The chain runs to 204 residues: Wound-induced proteinase inhibitor 2 (204 aa).

A signal peptide spans 1–25 (MAVPKEVSFLASLLVLGILLLHVDA). 3 repeat units span residues 25-67 (AKAC…DPNN), 68-125 (PKPC…DPNN), and 126-183 (PKPC…DPNH). Cystine bridges form between Cys28-Cys100, Cys38-Cys75, Cys41-Cys59, Cys42-Cys71, Cys48-Cys84, and Cys99-Cys117. The stretch at 184–204 (PKACPKNCDPNIAYSLCLYEK) is one 4; truncated repeat.

It belongs to the protease inhibitor I20 (potato type II proteinase inhibitor) family.

This is Wound-induced proteinase inhibitor 2 (PIN2) from Capsicum annuum (Capsicum pepper).